The chain runs to 722 residues: Solute carrier organic anion transporter family member 4A1 (722 aa).

Residues 1-52 (MPLHQLGDKPLTFPSPNSAMENGLDHTPPSRRASPGTPLSPGSLRSAAHSPL) form a disordered region. Residues 1-103 (MPLHQLGDKP…PCLQVLNTPK (103 aa)) lie on the Cytoplasmic side of the membrane. Serine 34 bears the Phosphoserine mark. Threonine 37 carries the post-translational modification Phosphothreonine. A phosphoserine mark is found at serine 40, serine 43, serine 46, and serine 50. A helical transmembrane segment spans residues 104 to 124 (GILFFLCAAAFLQGMTVNGFI). Topologically, residues 125 to 143 (NTVITSLERRYDLHSYQSG) are extracellular. Residues 144–164 (LIASSYDIAACLCLTFVSYFG) form a helical membrane-spanning segment. Topologically, residues 165–170 (GSGHKP) are cytoplasmic. The helical transmembrane segment at 171 to 195 (RWLGWGVLLMGTGSLVFALPHFTAG) threads the bilayer. Topologically, residues 196–222 (RYEVELDAGVRTCPANPGAVCADSTSG) are extracellular. A helical transmembrane segment spans residues 223 to 253 (LSRYQLVFMLGQFLHGVGATPLYTLGVTYLD). At 254–272 (ENVKSSCSPVYIAIFYTAA) the chain is on the cytoplasmic side. The helical transmembrane segment at 273–293 (ILGPAAGYLIGGALLNIYTEM) threads the bilayer. The Extracellular segment spans residues 294 to 307 (GRRTELTTESPLWV). The helical transmembrane segment at 308–332 (GAWWVGFLGSGAAAFFTAVPILGYP) threads the bilayer. Residues 333 to 378 (RQLPGSQRYAVMRAAEMHQLKDSSRGEASNPDFGKTIRDLPLSIWL) lie on the Cytoplasmic side of the membrane. A helical transmembrane segment spans residues 379–400 (LLKNPTFILLCLAGATEATLIT). At 401–420 (GMSTFSPKFLESQFSLSASE) the chain is on the extracellular side. A helical transmembrane segment spans residues 421 to 444 (AATLFGYLVVPAGGGGTFLGGFFV). At 445 to 448 (NKLR) the chain is on the cytoplasmic side. Residues 449–471 (LRGSAVIKFCLFCTVVSLLGILV) traverse the membrane as a helical segment. The Extracellular segment spans residues 472–580 (FSLHCPSVPM…TSTCQRKPLL (109 aa)). Residues 498–555 (LNLTAPCNAACSCQPEHYSPVCGSDGLMYFSLCHAGCPAATETNVDGQKVYRDCSCIP) form the Kazal-like domain. N-linked (GlcNAc...) asparagine glycosylation occurs at asparagine 499. 3 disulfides stabilise this stretch: cysteine 504–cysteine 534, cysteine 510–cysteine 530, and cysteine 519–cysteine 553. Asparagine 557 carries an N-linked (GlcNAc...) asparagine glycan. A helical transmembrane segment spans residues 581–603 (LVFIFVVIFFTFLSSIPALTATL). At 604 to 612 (RCVRDPQRS) the chain is on the cytoplasmic side. A helical membrane pass occupies residues 613-638 (FALGIQWIVVRILGGIPGPIAFGWVI). The Extracellular portion of the chain corresponds to 639-671 (DKACLLWQDQCGQQGSCLVYQNSAMSRYILIMG). The chain crosses the membrane as a helical span at residues 672-689 (LLYKVLGVLFFAIACFLY). Over 690 to 722 (KPLSESSDGLETCLPSQSSAPDSATDSQLQSSV) the chain is Cytoplasmic. Residues 703 to 722 (LPSQSSAPDSATDSQLQSSV) form a disordered region.

It belongs to the organo anion transporter (TC 2.A.60) family. As to expression, widely expressed. Expressed in placental trophoblasts. Expressed in pancreas, kidney, skeletal muscle, liver, lung, brain, heart, colon, small intestine, ovary, testis, prostate, thymus and spleen. In testis, primarily localized to Leydig cells.

It is found in the cell membrane. The catalysed reaction is 3,3',5-triiodo-L-thyronine(out) + L-glutamate(in) = 3,3',5-triiodo-L-thyronine(in) + L-glutamate(out). It catalyses the reaction L-thyroxine(out) + L-glutamate(in) = L-thyroxine(in) + L-glutamate(out). The enzyme catalyses estrone 3-sulfate(out) + L-glutamate(in) = estrone 3-sulfate(in) + L-glutamate(out). It carries out the reaction taurocholate(out) + L-glutamate(in) = taurocholate(in) + L-glutamate(out). The catalysed reaction is 3,3',5-triiodo-L-thyronine(out) = 3,3',5-triiodo-L-thyronine(in). It catalyses the reaction L-thyroxine(out) = L-thyroxine(in). The enzyme catalyses 3,3',5'-triiodo-L-thyronine(out) = 3,3',5'-triiodo-L-thyronine(in). It carries out the reaction estrone 3-sulfate(out) = estrone 3-sulfate(in). The catalysed reaction is 17beta-estradiol 17-O-(beta-D-glucuronate)(out) = 17beta-estradiol 17-O-(beta-D-glucuronate)(in). It catalyses the reaction taurocholate(out) = taurocholate(in). The enzyme catalyses prostaglandin E2(out) = prostaglandin E2(in). Its function is as follows. Organic anion antiporter with apparent broad substrate specificity. Recognizes various substrates including thyroid hormones 3,3',5-triiodo-L-thyronine (T3), L-thyroxine (T4) and 3,3',5'-triiodo-L-thyronine (rT3), conjugated steroids such as estrone 3-sulfate and estradiol 17-beta glucuronide, bile acids such as taurocholate and prostanoids such as prostaglandin E2, likely operating in a tissue-specific manner. May be involved in uptake of metabolites from the circulation into organs such as kidney, liver or placenta. Possibly drives the selective transport of thyroid hormones and estrogens coupled to an outward glutamate gradient across the microvillous membrane of the placenta. The transport mechanism, its electrogenicity and potential tissue-specific counterions remain to be elucidated. This chain is Solute carrier organic anion transporter family member 4A1 (SLCO4A1), found in Homo sapiens (Human).